The primary structure comprises 437 residues: Probable indole-3-pyruvate monooxygenase YUCCA3 (437 aa).

FAD is bound at residue 41–46 (GAGPSG). 212–217 (GCGNSG) serves as a coordination point for NADP(+).

This sequence belongs to the FMO family. It depends on FAD as a cofactor.

It carries out the reaction indole-3-pyruvate + NADPH + O2 + H(+) = (indol-3-yl)acetate + CO2 + NADP(+) + H2O. It participates in plant hormone metabolism; auxin biosynthesis. Functionally, involved in auxin biosynthesis. Belongs to the set of redundant YUCCA genes probably responsible for auxin biosynthesis in roots. This is Probable indole-3-pyruvate monooxygenase YUCCA3 (YUC3) from Arabidopsis thaliana (Mouse-ear cress).